Here is a 285-residue protein sequence, read N- to C-terminus: Bifunctional protein FolD (285 aa).

NADP(+) contacts are provided by residues 166–168, S191, and I232; that span reads GRS.

This sequence belongs to the tetrahydrofolate dehydrogenase/cyclohydrolase family. Homodimer.

The catalysed reaction is (6R)-5,10-methylene-5,6,7,8-tetrahydrofolate + NADP(+) = (6R)-5,10-methenyltetrahydrofolate + NADPH. It catalyses the reaction (6R)-5,10-methenyltetrahydrofolate + H2O = (6R)-10-formyltetrahydrofolate + H(+). It functions in the pathway one-carbon metabolism; tetrahydrofolate interconversion. Functionally, catalyzes the oxidation of 5,10-methylenetetrahydrofolate to 5,10-methenyltetrahydrofolate and then the hydrolysis of 5,10-methenyltetrahydrofolate to 10-formyltetrahydrofolate. The sequence is that of Bifunctional protein FolD from Rickettsia typhi (strain ATCC VR-144 / Wilmington).